The primary structure comprises 454 residues: B-cell lymphoma 3 protein (454 aa).

Residues 1–50 (MPRCPAGAMDEGPVDLRTRPKAAGLPGAALPLRKRPLRAPSPEPAAPRGA) are disordered. Low complexity predominate over residues 21 to 31 (KAAGLPGAALP). A Phosphoserine modification is found at S41. ANK repeat units lie at residues 134–163 (DGDT…QGGR), 171–200 (LRQT…SPMA), 204–235 (HGQT…TLDL), 241–270 (DGLT…DIDA), 275–304 (SGRS…NVNA), 308–337 (SGSS…DSSL), and 338–367 (KNCH…RPAS). The interval 360-454 (GKATRPASTS…VPPSPAPGGS (95 aa)) is disordered. Residues 365–381 (PASTSQPDPSPDRSANT) show a composition bias toward polar residues. Residue S374 is modified to Phosphoserine. Residues 382-404 (SPESSSRLSSNGLLSASPSSSPS) show a composition bias toward low complexity. A phosphoserine; by GSK3 mark is found at S402 and S406. Residues 405–418 (QSPPRDPPGFPMAP) show a composition bias toward pro residues. Over residues 432 to 442 (LPFAGVLRGPG) the composition is skewed to low complexity. Positions 443–454 (RPVPPSPAPGGS) are enriched in pro residues.

As to quaternary structure, component of a complex consisting of the NF-kappa-B p52-p52 homodimer and BCL3. Component of a complex consisting of the NF-kappa-B p50-p50 homodimer and BCL3. Interacts with N4BP2, COPS5 and PIR. Interacts with CYLD. In terms of processing, polyubiquitinated. Ubiquitination via 'Lys-63'-linked ubiquitin chains is required for nuclear accumulation. Deubiquitinated by CYLD, which acts on 'Lys-63'-linked ubiquitin chains. Deubiquitination by CYLD prevents nuclear accumulation. Activated by phosphorylation.

It localises to the nucleus. It is found in the cytoplasm. Its subcellular location is the perinuclear region. Functionally, contributes to the regulation of transcriptional activation of NF-kappa-B target genes. In the cytoplasm, inhibits the nuclear translocation of the NF-kappa-B p50 subunit. In the nucleus, acts as transcriptional activator that promotes transcription of NF-kappa-B target genes. Contributes to the regulation of cell proliferation. The sequence is that of B-cell lymphoma 3 protein (BCL3) from Homo sapiens (Human).